Reading from the N-terminus, the 160-residue chain is Endoribonuclease YbeY (160 aa).

The Zn(2+) site is built by H127, H131, and H137.

Belongs to the endoribonuclease YbeY family. The cofactor is Zn(2+).

The protein localises to the cytoplasm. Single strand-specific metallo-endoribonuclease involved in late-stage 70S ribosome quality control and in maturation of the 3' terminus of the 16S rRNA. This is Endoribonuclease YbeY from Synechococcus sp. (strain RCC307).